The following is a 121-amino-acid chain: Small ribosomal subunit protein uS13 (121 aa).

The interval 97 to 121 is disordered; that stretch reads VRGQRTRTNARTRRGARKTVAGKKK. The span at 100 to 121 shows a compositional bias: basic residues; the sequence is QRTRTNARTRRGARKTVAGKKK.

The protein belongs to the universal ribosomal protein uS13 family. In terms of assembly, part of the 30S ribosomal subunit. Forms a loose heterodimer with protein S19. Forms two bridges to the 50S subunit in the 70S ribosome.

Located at the top of the head of the 30S subunit, it contacts several helices of the 16S rRNA. In the 70S ribosome it contacts the 23S rRNA (bridge B1a) and protein L5 of the 50S subunit (bridge B1b), connecting the 2 subunits; these bridges are implicated in subunit movement. Contacts the tRNAs in the A and P-sites. This is Small ribosomal subunit protein uS13 from Synechococcus sp. (strain CC9311).